Reading from the N-terminus, the 618-residue chain is Camphene synthase, chloroplastic (618 aa).

Residues 1 to 51 (MALLSITPLVSRSCLSSSHEIKALRRTIPTLGICRPGKSVAHSINMCLTSV) constitute a chloroplast transit peptide. Residues Asp-369, Asp-373, and Asp-521 each contribute to the Mg(2+) site. The DDXXD motif signature appears at 369 to 373 (DDMYD).

Belongs to the terpene synthase family. Tpsd subfamily. Requires Mg(2+) as cofactor. It depends on Mn(2+) as a cofactor. K(+) is required as a cofactor.

The protein localises to the plastid. It localises to the chloroplast. It carries out the reaction (2E)-geranyl diphosphate = (1S,4R)-camphene + diphosphate. It functions in the pathway terpene metabolism; oleoresin biosynthesis. Its function is as follows. Involved in defensive oleoresin formation in conifers in response to insect attack or other injury. Involved in monoterpene (C10) olefins biosynthesis. This Abies grandis (Grand fir) protein is Camphene synthase, chloroplastic (ag6).